A 135-amino-acid polypeptide reads, in one-letter code: Small ribosomal subunit protein bS16 (135 aa).

The segment at Arg82–Gly135 is disordered. Basic and acidic residues predominate over residues Ala94–Glu121. Residues Glu123–Gly135 are compositionally biased toward acidic residues.

This sequence belongs to the bacterial ribosomal protein bS16 family.

This chain is Small ribosomal subunit protein bS16, found in Synechococcus sp. (strain CC9605).